A 216-amino-acid chain; its full sequence is Molybdenum cofactor guanylyltransferase (216 aa).

GTP is bound by residues 16–18 (LAG), Lys28, Asn57, Asp73, and Asp108. Asp108 provides a ligand contact to Mg(2+).

The protein belongs to the MobA family. Monomer. Requires Mg(2+) as cofactor.

It localises to the cytoplasm. The catalysed reaction is Mo-molybdopterin + GTP + H(+) = Mo-molybdopterin guanine dinucleotide + diphosphate. Functionally, transfers a GMP moiety from GTP to Mo-molybdopterin (Mo-MPT) cofactor (Moco or molybdenum cofactor) to form Mo-molybdopterin guanine dinucleotide (Mo-MGD) cofactor. The chain is Molybdenum cofactor guanylyltransferase from Rhizobium rhizogenes (strain K84 / ATCC BAA-868) (Agrobacterium radiobacter).